The following is a 358-amino-acid chain: MDIRRKRFTIEGAKRIILEKKRLEEKKRIAEEKKRIALIEKQRIAEEKKRIAEEKKRFALEEKKRIAEEKKRIAEEKKRIVEEKKRLALIEKQRIAEEKIASGRKIRKRISTNATKHEREFVKVINSMFVGPATFVFVDIKGNKSREIHNVVRFRQLQGSKAKSPTAYVDREYNKPKADIAAVDITGKDVAWISHKASEGYQQYLKISGKNLKFTGKELEEVLSFKRKVVSMAPVSKIWPANKTVWSPIKSNLIKNQAIFGFDYGKKPGRDNVDIIGQGRPIITKRGSILYLTFTGFSALNGHLENFTGKHEPVFYVRTERSSSGRSITTVVNGVTYKNLRFFIHPYNFVSSKTQRIM.

Requires Mg(2+) as cofactor.

It catalyses the reaction Endonucleolytic cleavage of DNA to give specific double-stranded fragments with terminal 5'-phosphates.. Its function is as follows. A P subtype restriction enzyme that recognizes the double-stranded sequence 5'-RGCY-3' and cleaves after G-2. In the presence of ATP, there is a relaxation of its specificity and it can cleave 5'-RGCN-3' and 5'-YGCY-3', but not 5'-YGCR-3' (R.CviJI* activity). This Paramecium bursaria Chlorella virus IL3A (PBCV-IL3A) protein is Type II restriction enzyme CviJI.